The chain runs to 396 residues: Elongation factor Tu (396 aa).

Residues 10–205 (KSHANIGTIG…AVDEYIPTPE (196 aa)) enclose the tr-type G domain. Positions 19–26 (GHVDHGKT) are G1. Position 19–26 (19–26 (GHVDHGKT)) interacts with GTP. T26 provides a ligand contact to Mg(2+). Residues 61 to 65 (GITIS) are G2. Residues 82 to 85 (DCPG) form a G3 region. GTP-binding positions include 82-86 (DCPGH) and 137-140 (NKCD). The G4 stretch occupies residues 137-140 (NKCD). The segment at 175-177 (SAL) is G5.

The protein belongs to the TRAFAC class translation factor GTPase superfamily. Classic translation factor GTPase family. EF-Tu/EF-1A subfamily. Monomer.

The protein localises to the cytoplasm. It carries out the reaction GTP + H2O = GDP + phosphate + H(+). Functionally, GTP hydrolase that promotes the GTP-dependent binding of aminoacyl-tRNA to the A-site of ribosomes during protein biosynthesis. This Bacillus velezensis (strain DSM 23117 / BGSC 10A6 / LMG 26770 / FZB42) (Bacillus amyloliquefaciens subsp. plantarum) protein is Elongation factor Tu.